The sequence spans 351 residues: Probable cell division control protein 7 homolog 1 (351 aa).

The Protein kinase domain occupies 21–341 (YTPIEKIGEG…ASDALSHPFF (321 aa)). ATP is bound by residues 27-35 (IGEGSFSVV) and Lys-50. Residue Asp-137 is the Proton acceptor of the active site.

It belongs to the protein kinase superfamily. Ser/Thr protein kinase family. CDC7 subfamily. Mg(2+) serves as cofactor.

It carries out the reaction L-seryl-[protein] + ATP = O-phospho-L-seryl-[protein] + ADP + H(+). It catalyses the reaction L-threonyl-[protein] + ATP = O-phospho-L-threonyl-[protein] + ADP + H(+). In terms of biological role, serine/threonine-protein kinase. Needed for the initiation of DNA synthesis during mitosis as well as for synaptonemal complex formation and commitment to recombination during meiosis. This chain is Probable cell division control protein 7 homolog 1 (CDC7-1), found in Encephalitozoon cuniculi (strain GB-M1) (Microsporidian parasite).